Reading from the N-terminus, the 340-residue chain is GTPase Obg (340 aa).

The region spanning 1–158 is the Obg domain; sequence MSFIDEAKVY…KWIILKLKII (158 aa). The OBG-type G domain occupies 159–325; that stretch reads SDVGIIGLPN…LSILIKHINK (167 aa). GTP is bound by residues 165–172, 190–194, 211–214, 278–281, and 306–308; these read GLPNAGKS, FTTLE, DIPG, NKCD, and SSI. 2 residues coordinate Mg(2+): Ser-172 and Thr-192.

It belongs to the TRAFAC class OBG-HflX-like GTPase superfamily. OBG GTPase family. In terms of assembly, monomer. The cofactor is Mg(2+).

The protein localises to the cytoplasm. Its function is as follows. An essential GTPase which binds GTP, GDP and possibly (p)ppGpp with moderate affinity, with high nucleotide exchange rates and a fairly low GTP hydrolysis rate. Plays a role in control of the cell cycle, stress response, ribosome biogenesis and in those bacteria that undergo differentiation, in morphogenesis control. In Ehrlichia ruminantium (strain Gardel), this protein is GTPase Obg.